The chain runs to 315 residues: Small ribosomal subunit biogenesis GTPase RsgA (315 aa).

In terms of domain architecture, CP-type G spans 79–243; the sequence is LSKESHILGA…LIDTPGIKGF (165 aa). Residues 128–131 and 182–190 each bind GTP; these read NKID and GHSGVGKSS. The Zn(2+) site is built by C267, C272, H274, and C280.

The protein belongs to the TRAFAC class YlqF/YawG GTPase family. RsgA subfamily. As to quaternary structure, monomer. Associates with 30S ribosomal subunit, binds 16S rRNA. The cofactor is Zn(2+).

It is found in the cytoplasm. In terms of biological role, one of several proteins that assist in the late maturation steps of the functional core of the 30S ribosomal subunit. Helps release RbfA from mature subunits. May play a role in the assembly of ribosomal proteins into the subunit. Circularly permuted GTPase that catalyzes slow GTP hydrolysis, GTPase activity is stimulated by the 30S ribosomal subunit. The chain is Small ribosomal subunit biogenesis GTPase RsgA from Porphyromonas gingivalis (strain ATCC BAA-308 / W83).